We begin with the raw amino-acid sequence, 446 residues long: Glycerol-3-phosphate acyltransferase 3 (446 aa).

3 helical membrane passes run isoleucine 11–serine 31, leucine 146–leucine 166, and isoleucine 168–leucine 188. Positions histidine 236 to aspartate 241 match the HXXXXD motif motif.

The protein belongs to the 1-acyl-sn-glycerol-3-phosphate acyltransferase family.

The protein resides in the endoplasmic reticulum membrane. It carries out the reaction sn-glycerol 3-phosphate + an acyl-CoA = a 1-acyl-sn-glycero-3-phosphate + CoA. The catalysed reaction is a 1-acyl-sn-glycero-3-phosphate + an acyl-CoA = a 1,2-diacyl-sn-glycero-3-phosphate + CoA. It catalyses the reaction dodecanoyl-CoA + sn-glycerol 3-phosphate = 1-dodecanoyl-sn-glycerol 3-phosphate + CoA. The enzyme catalyses sn-glycerol 3-phosphate + hexadecanoyl-CoA = 1-hexadecanoyl-sn-glycero-3-phosphate + CoA. It carries out the reaction sn-glycerol 3-phosphate + (9Z)-octadecenoyl-CoA = 1-(9Z-octadecenoyl)-sn-glycero-3-phosphate + CoA. The catalysed reaction is (9Z,12Z)-octadecadienoyl-CoA + sn-glycerol 3-phosphate = 1-(9Z,12Z)-octadecadienoyl-sn-glycero-3-phosphate + CoA. It catalyses the reaction 1-tetradecanoyl-sn-glycerol 3-phosphate + (9Z)-octadecenoyl-CoA = 1-tetradecanoyl-2-(9Z)-octadecenoyl-sn-glycero-3-phosphate + CoA. The enzyme catalyses 1-hexadecanoyl-sn-glycero-3-phosphate + (9Z)-octadecenoyl-CoA = 1-hexadecanoyl-2-(9Z-octadecenoyl)-sn-glycero-3-phosphate + CoA. It carries out the reaction 1-(9Z-octadecenoyl)-sn-glycero-3-phosphate + (9Z)-octadecenoyl-CoA = 1,2-di-(9Z-octadecenoyl)-sn-glycero-3-phosphate + CoA. The catalysed reaction is 1-(6Z,9Z,12Z-octadecatrienoyl)-sn-glycero-3-phosphate + (9Z)-octadecenoyl-CoA = (6Z,9Z,12Z)-octadecatrienoyl-2-(9Z)-octadecenoyl-sn-glycero-3-phosphate + CoA. It catalyses the reaction 1-(9Z,12Z,15Z)-octadecatrienoyl-sn-glycero-3-phosphate + (9Z)-octadecenoyl-CoA = 1-(9Z,12Z,15Z)-octadecatrienoyl-2-(9Z)-octadecenoyl-sn-glycero-3-phosphate + CoA. The enzyme catalyses 1-(9Z-octadecenoyl)-sn-glycero-3-phosphate + tetradecanoyl-CoA = 1-(9Z)-octadecenoyl-2-tetradecanoyl-sn-glycero-3-phosphate + CoA. It carries out the reaction 1-(9Z-octadecenoyl)-sn-glycero-3-phosphate + hexadecanoyl-CoA = 1-(9Z)-octadecenoyl-2-hexadecanoyl-sn-glycero-3-phosphate + CoA. The catalysed reaction is 1-(9Z-octadecenoyl)-sn-glycero-3-phosphate + octadecanoyl-CoA = 1-(9Z-octadecenoyl)-2-octadecanoyl-sn-glycero-3-phosphate + CoA. It catalyses the reaction 1-(9Z-octadecenoyl)-sn-glycero-3-phosphate + (9Z,12Z)-octadecadienoyl-CoA = 1-(9Z)-octadecenoyl-2-(9Z,12Z)-octadecadienoyl-sn-glycero-3-phosphate + CoA. The enzyme catalyses 1-(5Z,8Z,11Z,14Z-eicosatetraenoyl)-sn-glycero-3-phosphate + (9Z)-octadecenoyl-CoA = 1-(5Z,8Z,11Z,14Z)-eicosatetraenoyl-2-(9Z)-octadecenoyl-sn-glycero-3-phosphate + CoA. Its pathway is glycerolipid metabolism; triacylglycerol biosynthesis. It functions in the pathway phospholipid metabolism; CDP-diacylglycerol biosynthesis; CDP-diacylglycerol from sn-glycerol 3-phosphate: step 1/3. Converts glycerol-3-phosphate to 1-acyl-sn-glycerol-3-phosphate (lysophosphatidic acid or LPA) by incorporating an acyl moiety at the sn-1 position of the glycerol backbone. Also converts LPA into 1,2-diacyl-sn-glycerol-3-phosphate (phosphatidic acid or PA) by incorporating an acyl moiety at the sn-2 position of the glycerol backbone. Protects cells against lipotoxicity. The chain is Glycerol-3-phosphate acyltransferase 3 from Xenopus laevis (African clawed frog).